Here is a 415-residue protein sequence, read N- to C-terminus: Multidrug resistance protein MdtA (415 aa).

The first 21 residues, 1-21 (MKGSYKSRWVIVIVVVIAAIA), serve as a signal peptide directing secretion. Residues 31 to 46 (DSQSAAPGATKQAQQS) are compositionally biased toward polar residues. 2 disordered regions span residues 31–56 (DSQSAAPGATKQAQQSPAGGRRGMRA) and 391–415 (VEAQSTTTPEEKATSREYAKKGARS). A compositionally biased stretch (basic and acidic residues) spans 399-415 (PEEKATSREYAKKGARS).

The protein belongs to the membrane fusion protein (MFP) (TC 8.A.1) family. Part of a tripartite efflux system composed of MdtA, MdtB and MdtC.

It is found in the cell inner membrane. Functionally, the MdtABC tripartite complex confers resistance against novobiocin and deoxycholate. The sequence is that of Multidrug resistance protein MdtA from Escherichia coli O45:K1 (strain S88 / ExPEC).